Consider the following 650-residue polypeptide: Acetyl-coenzyme A synthetase (650 aa).

Residues 191 to 194 (RGGR), Thr311, and Asn335 each bind CoA. ATP is bound by residues 387–389 (GEP), 411–416 (DTWWQT), Asp500, and Arg515. Ser523 lines the CoA pocket. Arg526 contacts ATP. Mg(2+)-binding residues include Val537, His539, and Val542. Residue Arg584 participates in CoA binding. Lys609 is modified (N6-acetyllysine).

Belongs to the ATP-dependent AMP-binding enzyme family. Mg(2+) is required as a cofactor. Post-translationally, acetylated. Deacetylation by the SIR2-homolog deacetylase activates the enzyme.

It carries out the reaction acetate + ATP + CoA = acetyl-CoA + AMP + diphosphate. Functionally, catalyzes the conversion of acetate into acetyl-CoA (AcCoA), an essential intermediate at the junction of anabolic and catabolic pathways. AcsA undergoes a two-step reaction. In the first half reaction, AcsA combines acetate with ATP to form acetyl-adenylate (AcAMP) intermediate. In the second half reaction, it can then transfer the acetyl group from AcAMP to the sulfhydryl group of CoA, forming the product AcCoA. The sequence is that of Acetyl-coenzyme A synthetase from Shewanella sp. (strain ANA-3).